Here is a 967-residue protein sequence, read N- to C-terminus: Kinesin-like protein KIF28P (967 aa).

The 349-residue stretch at 7 to 355 (DSVKAVRVRP…LRYAERERKI (349 aa)) folds into the Kinesin motor domain. 111 to 118 (GQTGSGKS) is an ATP binding site. One can recognise an FHA domain in the interval 410-472 (APCPRPALSP…LQHLDRLILG (63 aa)). A coiled-coil region spans residues 822–851 (NQIPELYLKLLKLEQETEPLRNINRALREE).

It belongs to the TRAFAC class myosin-kinesin ATPase superfamily. Kinesin family.

It is found in the mitochondrion membrane. In terms of biological role, microtubule-dependent motor protein required for mitochondrion morphology and transport of mitochondria in neuronal cells. The sequence is that of Kinesin-like protein KIF28P (KIF28P) from Homo sapiens (Human).